Reading from the N-terminus, the 564-residue chain is Phenylalanine--tRNA ligase beta subunit (564 aa).

In terms of domain architecture, B5 spans 286–362; the sequence is YFQNTLEVSV…IGRGLDSFKP (77 aa). 4 residues coordinate Mg(2+): Asp-340, Asp-346, Glu-349, and Glu-350.

It belongs to the phenylalanyl-tRNA synthetase beta subunit family. Type 2 subfamily. In terms of assembly, tetramer of two alpha and two beta subunits. Mg(2+) serves as cofactor.

The protein localises to the cytoplasm. It catalyses the reaction tRNA(Phe) + L-phenylalanine + ATP = L-phenylalanyl-tRNA(Phe) + AMP + diphosphate + H(+). This Borrelia hermsii (strain HS1 / DAH) protein is Phenylalanine--tRNA ligase beta subunit.